Here is a 447-residue protein sequence, read N- to C-terminus: Tryptophan synthase beta chain (447 aa).

Lysine 92 bears the N6-(pyridoxal phosphate)lysine mark. The tract at residues 408-447 (GLAVKGGEQPKEFSDGPPLGKLAPSGGSAVREATSVGARK) is disordered.

This sequence belongs to the TrpB family. Tetramer of two alpha and two beta chains. It depends on pyridoxal 5'-phosphate as a cofactor.

It catalyses the reaction (1S,2R)-1-C-(indol-3-yl)glycerol 3-phosphate + L-serine = D-glyceraldehyde 3-phosphate + L-tryptophan + H2O. Its pathway is amino-acid biosynthesis; L-tryptophan biosynthesis; L-tryptophan from chorismate: step 5/5. Its function is as follows. The beta subunit is responsible for the synthesis of L-tryptophan from indole and L-serine. In Polaromonas sp. (strain JS666 / ATCC BAA-500), this protein is Tryptophan synthase beta chain.